The following is a 420-amino-acid chain: CinA-like protein (420 aa).

It belongs to the CinA family.

This chain is CinA-like protein, found in Chlorobium phaeobacteroides (strain BS1).